The primary structure comprises 411 residues: Putative BMP-2-inducible kinase-like protein (411 aa).

Disordered stretches follow at residues 1 to 87, 215 to 280, and 392 to 411; these read MIAP…TQDI, SQQQ…RVSQ, and QQSQ…PSKQ. 2 stretches are compositionally biased toward basic and acidic residues: residues 8–18 and 53–68; these read SSEEEGQKDEE and EKRS…KAKY. Positions 47–71 form a coiled coil; sequence EDEEEEEKRSSDSDYEQAKAKYSDM. 2 stretches are compositionally biased toward basic residues: residues 220 to 234 and 243 to 258; these read VKQR…RQRR and NGKR…KKTL.

This chain is Putative BMP-2-inducible kinase-like protein (BMP2KL), found in Homo sapiens (Human).